Reading from the N-terminus, the 123-residue chain is Fluoride-specific ion channel FluC (123 aa).

4 helical membrane-spanning segments follow: residues 6–26 (VALVLIGGGTGAVARYYLSGV), 38–58 (LLVNSLASFLLGYLYGLIFWG), 68–88 (FLGTGFCGGLSTFSTFSYETF), and 100–120 (LLNIFANVLATIFLVFLGFVL). Na(+) contacts are provided by glycine 75 and serine 78.

This sequence belongs to the fluoride channel Fluc/FEX (TC 1.A.43) family.

The protein localises to the cell membrane. The enzyme catalyses fluoride(in) = fluoride(out). With respect to regulation, na(+) is not transported, but it plays an essential structural role and its presence is essential for fluoride channel function. Fluoride-specific ion channel. Important for reducing fluoride concentration in the cell, thus reducing its toxicity. The sequence is that of Fluoride-specific ion channel FluC from Pyrococcus furiosus (strain ATCC 43587 / DSM 3638 / JCM 8422 / Vc1).